The sequence spans 278 residues: Urease accessory protein UreD (278 aa).

The protein belongs to the UreD family. In terms of assembly, ureD, UreF and UreG form a complex that acts as a GTP-hydrolysis-dependent molecular chaperone, activating the urease apoprotein by helping to assemble the nickel containing metallocenter of UreC. The UreE protein probably delivers the nickel.

The protein resides in the cytoplasm. Required for maturation of urease via the functional incorporation of the urease nickel metallocenter. This chain is Urease accessory protein UreD, found in Staphylococcus epidermidis (strain ATCC 12228 / FDA PCI 1200).